An 870-amino-acid polypeptide reads, in one-letter code: A-kinase anchor protein 2 (870 aa).

Disordered regions lie at residues 14-43 and 103-165; these read PGITSTPHSKDHSSPFYSPSHNGLLTDHHE and IEKA…SSRD. Ser122 bears the Phosphoserine mark. A compositionally biased stretch (polar residues) spans 133–151; sequence GHSTDQPQDMLGNSLQAPA. At Ser152 the chain carries Phosphoserine. The segment covering 152–161 has biased composition (low complexity); it reads SPSSSTSSHC. Lys174 is covalently cross-linked (Glycyl lysine isopeptide (Lys-Gly) (interchain with G-Cter in SUMO1); alternate). Residue Lys174 forms a Glycyl lysine isopeptide (Lys-Gly) (interchain with G-Cter in SUMO2); alternate linkage. Positions 213 to 307 form a coiled coil; that stretch reads EEMIELEKER…QQQQLSTSQL (95 aa). The tract at residues 233–324 is disordered; the sequence is KNPGIAAKWW…EHLDSIEHTK (92 aa). Positions 259–274 are enriched in basic and acidic residues; the sequence is LESHRKYKERKEKRAQ. Residues 275–302 are compositionally biased toward low complexity; sequence QEQLQLQQQQQQQLQQLQQLQQQQQQQL. The segment covering 313-324 has biased composition (basic and acidic residues); that stretch reads AHEHLDSIEHTK. The residue at position 347 (Ser347) is a Phosphoserine. Residues 409–436 are disordered; sequence ESQSAGAGTGNAATQGKEGPYSEPSKRG. Over residues 410–424 the composition is skewed to low complexity; the sequence is SQSAGAGTGNAATQG. 3 positions are modified to phosphoserine: Ser472, Ser476, and Ser528. Positions 506 to 543 are enriched in polar residues; that stretch reads FSMDNISDSGASNETPNALQENSLADFSLPQTPQTDNP. 2 disordered regions span residues 506 to 577 and 595 to 688; these read FSMD…DPLE and QVDK…RPEG. At Thr537 the chain carries Phosphothreonine. The PKA-RII subunit binding domain stretch occupies residues 576–589; that stretch reads LEYQAGLLVQNAIQ. Over residues 595–608 the composition is skewed to basic and acidic residues; the sequence is QVDKAEVHTSKEGS. The residue at position 641 (Ser641) is a Phosphoserine. Over residues 644 to 665 the composition is skewed to basic and acidic residues; it reads QEKRDVLPKILPGEDKTLREKG. Residues 720 to 755 adopt a coiled-coil conformation; that stretch reads KLRSRKQRTLSMIEEEIRAAQEREEELKRQRQVRQS. Phosphoserine occurs at positions 730, 758, 789, and 796. Residues 740-814 are disordered; that stretch reads QEREEELKRQ…EAAGAQRPKN (75 aa). Residues 755-774 are compositionally biased toward polar residues; it reads STPSPRAQNAPSLPSRTTCY.

Its subcellular location is the apical cell membrane. Functionally, binds to regulatory subunit (RII) of protein kinase A. May be involved in establishing polarity in signaling systems or in integrating PKA-RII isoforms with downstream effectors to capture, amplify and focus diffuse, trans-cellular signals carried by cAMP. Binds to and modulates the structure of the actin cytoskeleton. This Rattus norvegicus (Rat) protein is A-kinase anchor protein 2.